The primary structure comprises 491 residues: Cytochrome P450 2B4 (491 aa).

The residue at position 128 (Ser-128) is a Phosphoserine; by PKA. Cys-436 serves as a coordination point for heme.

Belongs to the cytochrome P450 family. Heme is required as a cofactor.

The protein resides in the endoplasmic reticulum membrane. It is found in the microsome membrane. It catalyses the reaction an organic molecule + reduced [NADPH--hemoprotein reductase] + O2 = an alcohol + oxidized [NADPH--hemoprotein reductase] + H2O + H(+). Functionally, cytochromes P450 are a group of heme-thiolate monooxygenases. In liver microsomes, this enzyme is involved in an NADPH-dependent electron transport pathway. It oxidizes a variety of structurally unrelated compounds, including steroids, fatty acids, and xenobiotics. In the epoxidation of arachidonic acid it has a unique preference for the 5,6-olefin. The sequence is that of Cytochrome P450 2B4 (CYP2B4) from Oryctolagus cuniculus (Rabbit).